The sequence spans 353 residues: UPF0283 membrane protein YcjF (353 aa).

Over residues 1–19 the composition is skewed to basic and acidic residues; sequence MSEPLKPRIDFAEPLKEEP. The disordered stretch occupies residues 1–35; the sequence is MSEPLKPRIDFAEPLKEEPTSAFKAQQTFSEAESR. The next 3 helical transmembrane spans lie at 70–90, 100–120, and 213–233; these read MVMGGLALFGASVVGQGVQWT, VALGGCAAGALIIGAGVGSVV, and ESTLMIVVSPLALVDMAFIAW.

It belongs to the UPF0283 family.

Its subcellular location is the cell inner membrane. In Salmonella newport (strain SL254), this protein is UPF0283 membrane protein YcjF.